Here is a 193-residue protein sequence, read N- to C-terminus: Adenine phosphoribosyltransferase (193 aa).

It belongs to the purine/pyrimidine phosphoribosyltransferase family. Homodimer.

It localises to the cytoplasm. It carries out the reaction AMP + diphosphate = 5-phospho-alpha-D-ribose 1-diphosphate + adenine. It participates in purine metabolism; AMP biosynthesis via salvage pathway; AMP from adenine: step 1/1. Its function is as follows. Catalyzes a salvage reaction resulting in the formation of AMP, that is energically less costly than de novo synthesis. In Bifidobacterium longum (strain DJO10A), this protein is Adenine phosphoribosyltransferase.